A 256-amino-acid polypeptide reads, in one-letter code: 3-methyl-2-oxobutanoate hydroxymethyltransferase (256 aa).

Positions 42 and 86 each coordinate Mg(2+). Residues 42–43 (DS), Asp-86, and Lys-116 contribute to the 3-methyl-2-oxobutanoate site. Glu-118 contacts Mg(2+). Catalysis depends on Glu-185, which acts as the Proton acceptor.

This sequence belongs to the PanB family. In terms of assembly, homodecamer; pentamer of dimers. Mg(2+) is required as a cofactor.

Its subcellular location is the cytoplasm. It carries out the reaction 3-methyl-2-oxobutanoate + (6R)-5,10-methylene-5,6,7,8-tetrahydrofolate + H2O = 2-dehydropantoate + (6S)-5,6,7,8-tetrahydrofolate. It functions in the pathway cofactor biosynthesis; (R)-pantothenate biosynthesis; (R)-pantoate from 3-methyl-2-oxobutanoate: step 1/2. In terms of biological role, catalyzes the reversible reaction in which hydroxymethyl group from 5,10-methylenetetrahydrofolate is transferred onto alpha-ketoisovalerate to form ketopantoate. This Prochlorococcus marinus (strain SARG / CCMP1375 / SS120) protein is 3-methyl-2-oxobutanoate hydroxymethyltransferase.